The following is a 281-amino-acid chain: MKNFFSMHAILLACSAGAGLAAITQGISEGTYSRIVEMATISQAAYANLCNIPPAITSAGKIYNAETDINGWVLRDDSRQEIITVFRGTGSDTNLQLDTNYTQAPFDTLPQCSGCAVHGGYYVGWVSVKDQVEGLIHQQASQYPDYSLVVTGHSLGASMAAITAAQLSATYNNITVYTFGEPRTGNQAYASYVDETFQATNPDATKFYRVTHTNDGIPNLPPTSQGYVHHGTEYWSVEPHGPQNMYLCLGDEVQCCEAQGGQGVNDAHVTYFGMASGACTW.

Residues 1–21 (MKNFFSMHAILLACSAGAGLA) form the signal peptide. 3 disulfides stabilise this stretch: C50–C279, C112–C115, and C248–C255. Residue D98 participates in substrate binding. N-linked (GlcNAc...) asparagine glycosylation occurs at N100. Y101 contacts substrate. S154 serves as the catalytic Nucleophile. N-linked (GlcNAc...) asparagine glycosylation is present at N173. D215 acts as the Charge relay system in catalysis. H268 is a substrate binding site. The Charge relay system role is filled by H268.

The protein belongs to the AB hydrolase superfamily. FaeA family.

It localises to the secreted. The catalysed reaction is feruloyl-polysaccharide + H2O = ferulate + polysaccharide.. Its function is as follows. Involved in degradation of plant cell walls. Hydrolyzes the feruloyl-arabinose ester bond in arabinoxylans, and the feruloyl-galactose ester bond in pectin. This chain is Probable feruloyl esterase A (faeA), found in Aspergillus oryzae (strain ATCC 42149 / RIB 40) (Yellow koji mold).